Reading from the N-terminus, the 448-residue chain is Phosphoglucosamine mutase (448 aa).

The active-site Phosphoserine intermediate is Ser100. Mg(2+)-binding residues include Ser100, Asp240, Asp242, and Asp244. A Phosphoserine modification is found at Ser100.

This sequence belongs to the phosphohexose mutase family. It depends on Mg(2+) as a cofactor. Activated by phosphorylation.

It catalyses the reaction alpha-D-glucosamine 1-phosphate = D-glucosamine 6-phosphate. In terms of biological role, catalyzes the conversion of glucosamine-6-phosphate to glucosamine-1-phosphate. In Bacillus velezensis (strain DSM 23117 / BGSC 10A6 / LMG 26770 / FZB42) (Bacillus amyloliquefaciens subsp. plantarum), this protein is Phosphoglucosamine mutase.